We begin with the raw amino-acid sequence, 821 residues long: Fibroblast growth factor receptor 2 (821 aa).

An N-terminal signal peptide occupies residues 1 to 21 (MVSWGRFICLVLVTMATLSLA). Over 22–377 (RPSFSLVEDT…EITASPDYLE (356 aa)) the chain is Extracellular. Positions 25 to 125 (FSLVEDTTLE…ETWIFMVNVT (101 aa)) constitute an Ig-like C2-type 1 domain. Residues cysteine 62 and cysteine 107 are joined by a disulfide bond. N-linked (GlcNAc...) asparagine glycans are attached at residues asparagine 83 and asparagine 123. The interval 129 to 151 (SSGDDEDDTDSSEDVVSENRSNQ) is disordered. Over residues 131 to 144 (GDDEDDTDSSEDVV) the composition is skewed to acidic residues. N-linked (GlcNAc...) asparagine glycosylation occurs at asparagine 147. 2 Ig-like C2-type domains span residues 154-247 (PYWT…YHLD) and 256-358 (PILQ…AWLT). Residues 161-178 (KMEKRLHACPAANTVKFR) are heparin-binding. Cysteine 179 and cysteine 231 form a disulfide bridge. 6 N-linked (GlcNAc...) asparagine glycosylation sites follow: asparagine 228, asparagine 241, asparagine 265, asparagine 297, asparagine 318, and asparagine 331. Cysteines 278 and 342 form a disulfide. A helical membrane pass occupies residues 378 to 398 (IAIYCIGVFLIACMVVTVIFC). At 399–821 (RMKTTTKKPD…YPHINGSVKT (423 aa)) the chain is on the cytoplasmic side. At tyrosine 466 the chain carries Phosphotyrosine; by autocatalysis. Positions 481–770 (LTLGKPLGEG…LTLTTNEEYL (290 aa)) constitute a Protein kinase domain. ATP contacts are provided by residues 487–495 (LGEGCFGQV), lysine 517, 565–567 (EYA), and asparagine 571. Phosphotyrosine; by autocatalysis occurs at positions 586 and 588. Catalysis depends on aspartate 626, which acts as the Proton acceptor. A phosphotyrosine; by autocatalysis mark is found at tyrosine 656, tyrosine 657, and tyrosine 769. Residue serine 780 is modified to Phosphoserine.

Belongs to the protein kinase superfamily. Tyr protein kinase family. Fibroblast growth factor receptor subfamily. In terms of assembly, monomer. Homodimer after ligand binding. Interacts predominantly with FGF1 and FGF2, but can also interact with FGF3, FGF4, FGF6, FGF7, FGF8, FGF9, FGF10, FGF17, FGF18 and FGF22 (in vitro). Ligand specificity is determined by tissue-specific expression of isoforms, and differences in the third Ig-like domain are crucial for ligand specificity. Affinity for fibroblast growth factors (FGFs) is increased by heparan sulfate glycosaminoglycans that function as coreceptors. Likewise, KLB increases the affinity for FGF19 and FGF21. Interacts with PLCG1. Interacts with GRB2 and PAK4. Interacts with FLRT2. Post-translationally, autophosphorylated. Binding of FGF family members together with heparan sulfate proteoglycan or heparin promotes receptor dimerization and autophosphorylation on tyrosine residues. Autophosphorylation occurs in trans between the two FGFR molecules present in the dimer. N-glycosylated in the endoplasmic reticulum. The N-glycan chains undergo further maturation to an Endo H-resistant form in the Golgi apparatus. In terms of processing, ubiquitinated. FGFR2 is rapidly ubiquitinated after autophosphorylation, leading to internalization and degradation. Subject to degradation both in lysosomes and by the proteasome.

Its subcellular location is the cell membrane. The protein localises to the golgi apparatus. It localises to the cytoplasmic vesicle. It catalyses the reaction L-tyrosyl-[protein] + ATP = O-phospho-L-tyrosyl-[protein] + ADP + H(+). Present in an inactive conformation in the absence of bound ligand. Ligand binding leads to dimerization and activation by autophosphorylation on tyrosine residues. Tyrosine-protein kinase that acts as a cell-surface receptor for fibroblast growth factors and plays an essential role in the regulation of cell proliferation, differentiation, migration and apoptosis, and in the regulation of embryonic development. Required for normal embryonic patterning, trophoblast function, limb bud development, lung morphogenesis, osteogenesis and skin development. Plays an essential role in the regulation of osteoblast differentiation, proliferation and apoptosis, and is required for normal skeleton development. Promotes cell proliferation in keratinocytes and immature osteoblasts, but promotes apoptosis in differentiated osteoblasts. Phosphorylates PLCG1, FRS2 and PAK4. Ligand binding leads to the activation of several signaling cascades. Activation of PLCG1 leads to the production of the cellular signaling molecules diacylglycerol and inositol 1,4,5-trisphosphate. Phosphorylation of FRS2 triggers recruitment of GRB2, GAB1, PIK3R1 and SOS1, and mediates activation of RAS, MAPK1/ERK2, MAPK3/ERK1 and the MAP kinase signaling pathway, as well as of the AKT1 signaling pathway. FGFR2 signaling is down-regulated by ubiquitination, internalization and degradation. Mutations that lead to constitutive kinase activation or impair normal FGFR2 maturation, internalization and degradation lead to aberrant signaling. Over-expressed FGFR2 promotes activation of STAT1. The sequence is that of Fibroblast growth factor receptor 2 (Fgfr2) from Mus musculus (Mouse).